Consider the following 355-residue polypeptide: Galectin-9 (355 aa).

2 consecutive Galectin domains span residues Phe17–Gln148 and Phe227–Thr355. A beta-D-galactoside contacts are provided by residues Asn48, His61, Arg65, Asn75, Trp82 to Lys88, His267, Arg271, Thr281, and Trp287 to Ser293.

Its subcellular location is the cytoplasm. The protein localises to the nucleus. It localises to the secreted. Its function is as follows. Binds galactosides. Has high affinity for the Forssman pentasaccharide. Ligand for HAVCR2/TIM3. Binding to HAVCR2 induces T-helper type 1 lymphocyte (Th1) death. Also stimulates bactericidal activity in infected macrophages by causing macrophage activation and IL1B secretion which restricts intracellular bacterial growth. Ligand for P4HB; the interaction retains P4HB at the cell surface of Th2 T helper cells, increasing disulfide reductase activity at the plasma membrane, altering the plasma membrane redox state and enhancing cell migration. Ligand for CD44; the interaction enhances binding of SMAD3 to the FOXP3 promoter, leading to up-regulation of FOXP3 expression and increased induced regulatory T (iTreg) cell stability and suppressive function. Promotes ability of mesenchymal stromal cells to suppress T-cell proliferation. Expands regulatory T-cells and induces cytotoxic T-cell apoptosis following virus infection. Activates ERK1/2 phosphorylation inducing cytokine (IL-6, IL-8, IL-12) and chemokine (CCL2) production in mast and dendritic cells. Inhibits degranulation and induces apoptosis of mast cells. Induces maturation and migration of dendritic cells. Inhibits natural killer (NK) cell function. Can transform NK cell phenotype from peripheral to decidual during pregnancy. Astrocyte derived galectin-9 enhances microglial TNF production. May play a role in thymocyte-epithelial interactions relevant to the biology of the thymus. May provide the molecular basis for urate flux across cell membranes, allowing urate that is formed during purine metabolism to efflux from cells and serving as an electrogenic transporter that plays an important role in renal and gastrointestinal urate excretion. Highly selective to the anion urate. This Bos taurus (Bovine) protein is Galectin-9 (LGALS9).